The chain runs to 178 residues: Phosphopantetheine adenylyltransferase (178 aa).

Thr17 contacts substrate. Residues 17 to 18 (TF) and His25 each bind ATP. Residues Lys49, Leu86, and Arg100 each contribute to the substrate site. ATP contacts are provided by residues 101 to 103 (GLR), Glu111, and 136 to 142 (LQPVASR).

The protein belongs to the bacterial CoaD family. Homohexamer. Mg(2+) is required as a cofactor.

It localises to the cytoplasm. The enzyme catalyses (R)-4'-phosphopantetheine + ATP + H(+) = 3'-dephospho-CoA + diphosphate. The protein operates within cofactor biosynthesis; coenzyme A biosynthesis; CoA from (R)-pantothenate: step 4/5. In terms of biological role, reversibly transfers an adenylyl group from ATP to 4'-phosphopantetheine, yielding dephospho-CoA (dPCoA) and pyrophosphate. In Zymomonas mobilis subsp. mobilis (strain ATCC 31821 / ZM4 / CP4), this protein is Phosphopantetheine adenylyltransferase.